A 337-amino-acid polypeptide reads, in one-letter code: Glyceraldehyde-3-phosphate dehydrogenase, cytosolic (337 aa).

Residues 13 to 14, D35, and R82 each bind NAD(+); that span reads RI. Residues 153–155, T184, 213–214, and R236 each bind D-glyceraldehyde 3-phosphate; these read SCT and TG. The Nucleophile role is filled by C154. Position 318 (N318) interacts with NAD(+).

This sequence belongs to the glyceraldehyde-3-phosphate dehydrogenase family. Homotetramer.

It is found in the cytoplasm. It catalyses the reaction D-glyceraldehyde 3-phosphate + phosphate + NAD(+) = (2R)-3-phospho-glyceroyl phosphate + NADH + H(+). The protein operates within carbohydrate degradation; glycolysis; pyruvate from D-glyceraldehyde 3-phosphate: step 1/5. Functionally, key enzyme in glycolysis that catalyzes the first step of the pathway by converting D-glyceraldehyde 3-phosphate (G3P) into 3-phospho-D-glyceroyl phosphate. Essential for the maintenance of cellular ATP levels and carbohydrate metabolism. The protein is Glyceraldehyde-3-phosphate dehydrogenase, cytosolic (GAPC) of Craterostigma plantagineum (Blue gem).